The primary structure comprises 475 residues: Sensor histidine kinase GlrK (475 aa).

Topologically, residues 1-13 are cytoplasmic; it reads MKRWPVFPRSLRQ. Residues 14-34 form a helical membrane-spanning segment; sequence LVMLAFLLILLPLLVLAWQAW. Topologically, residues 35-173 are periplasmic; that stretch reads QSLNALSDQA…LQREIAERGQ (139 aa). A helical membrane pass occupies residues 174 to 194; the sequence is YFGWQSLVLFLVSLVMVLLFT. Topologically, residues 195-475 are cytoplasmic; it reads RMIIGPVKNI…IELPSSKNTK (281 aa). In terms of domain architecture, Histidine kinase spans 256 to 472; that stretch reads HLSHELKTPL…CFRIELPSSK (217 aa). His-259 is subject to Phosphohistidine; by autocatalysis.

Post-translationally, autophosphorylated.

It is found in the cell inner membrane. The enzyme catalyses ATP + protein L-histidine = ADP + protein N-phospho-L-histidine.. Member of the two-component regulatory system GlrR/GlrK that up-regulates transcription of the glmY sRNA when cells enter the stationary growth phase. Activates GlrR by phosphorylation. The sequence is that of Sensor histidine kinase GlrK (glrK) from Escherichia coli (strain K12).